Reading from the N-terminus, the 596-residue chain is Aspartate--tRNA(Asp/Asn) ligase (596 aa).

Position 175 (Glu-175) interacts with L-aspartate. The tract at residues 199 to 202 (QQYK) is aspartate. L-aspartate-binding residues include Arg-221 and His-454. ATP is bound at residue 221-223 (RDE). Residue Glu-488 participates in ATP binding. Arg-495 serves as a coordination point for L-aspartate. 540–543 (GVDR) serves as a coordination point for ATP.

It belongs to the class-II aminoacyl-tRNA synthetase family. Type 1 subfamily. As to quaternary structure, homodimer.

The protein resides in the cytoplasm. It carries out the reaction tRNA(Asx) + L-aspartate + ATP = L-aspartyl-tRNA(Asx) + AMP + diphosphate. In terms of biological role, aspartyl-tRNA synthetase with relaxed tRNA specificity since it is able to aspartylate not only its cognate tRNA(Asp) but also tRNA(Asn). Reaction proceeds in two steps: L-aspartate is first activated by ATP to form Asp-AMP and then transferred to the acceptor end of tRNA(Asp/Asn). The sequence is that of Aspartate--tRNA(Asp/Asn) ligase from Bartonella bacilliformis (strain ATCC 35685 / KC583 / Herrer 020/F12,63).